A 308-amino-acid chain; its full sequence is Staphylococcal superantigen-like 4 (308 aa).

The N-terminal stretch at 1 to 30 is a signal peptide; it reads MKITTIAKTSLALGLLTTGVITTTTQAANA. The tract at residues 32–117 is disordered; sequence TLSSTKVEAP…TTKQVPTEIN (86 aa). Composition is skewed to polar residues over residues 33–47 and 55–76; these read LSST…TPPS and SKPN…TANA. Over residues 77 to 93 the composition is skewed to low complexity; it reads TTPPSTKVTTPPSTNTP. The span at 94 to 114 shows a compositional bias: polar residues; it reads QPMQSTKSDTPQSPTTKQVPT. The interval 180 to 278 is sialyl Lewis X-binding; the sequence is VDVFVVLEEN…VIKMKNGGKY (99 aa).

It belongs to the staphylococcal/streptococcal toxin family.

It localises to the secreted. Secreted protein that plays a role in immune innate response inhibition by interfering with host TLR2-mediated pathway. This Staphylococcus aureus (strain NCTC 8325 / PS 47) protein is Staphylococcal superantigen-like 4.